Consider the following 100-residue polypeptide: Defensin-like protein 316 (100 aa).

Positions 1 to 18 are cleaved as a signal peptide; the sequence is MASHIICYIFCIIKLSCA. 3 cysteine pairs are disulfide-bonded: C21–C84, C43–C64, and C53–C76.

The protein belongs to the DEFL family.

The protein localises to the secreted. The chain is Defensin-like protein 316 from Arabidopsis thaliana (Mouse-ear cress).